Consider the following 493-residue polypeptide: Reticulophagy regulator 1 (493 aa).

A disordered region spans residues 1-52 (MASPAPPEPAEQGSPALAAAPQAPPPPTRAPPEEPEGAAPPEEGAAAGAGRQ). Residues 1-55 (MASPAPPEPAEQGSPALAAAPQAPPPPTRAPPEEPEGAAPPEEGAAAGAGRQVEE) lie on the Cytoplasmic side of the membrane. Positions 37-52 (GAAPPEEGAAAGAGRQ) are enriched in low complexity. A helical membrane pass occupies residues 56–76 (AAGGVAAVVTWLLGEPALWLG). Over 77–87 (GRADELLSWKR) the chain is Lumenal. The segment at 80–229 (DELLSWKRPL…LLCAFLCPLF (150 aa)) is reticulon homology domain. A helical membrane pass occupies residues 88–108 (PLHSLLAFVGANLVFWFLALT). Residues 109–114 (PWRVYH) lie on the Cytoplasmic side of the membrane. A helical transmembrane segment spans residues 115–135 (LISVMILTRVIMQIIKDMILS). At 136–204 (RTRGAQLWRS…LVCSVCTFFT (69 aa)) the chain is on the lumenal side. S145 is modified (phosphoserine). S147 is subject to Phosphoserine; by CAMK2B. Phosphoserine is present on S149. A helical transmembrane segment spans residues 205–225 (ILGSYIPGVILSYLLLLCAFL). The Cytoplasmic portion of the chain corresponds to 226 to 493 (CPLFKCNDIG…GFLSNLLGGH (268 aa)). Positions 315–326 (FNLSEGYTPQTD) are enriched in polar residues. Disordered stretches follow at residues 315–394 (FNLS…GLSL) and 435–493 (AAPS…LGGH). The span at 330-344 (DLDRPSEEVFSRDLS) shows a compositional bias: basic and acidic residues. T353 bears the Phosphothreonine mark. Residues 368-388 (ELKRKKEQLDGGPRRSTEKKS) are compositionally biased toward basic and acidic residues. Over residues 441-463 (EDTDTEEGDDFELLDQSELDQIE) the composition is skewed to acidic residues. The LIR motif signature appears at 449 to 454 (DDFELL). Over residues 467 to 486 (GLSQDQEAEAQQNKKSSGFL) the composition is skewed to polar residues.

It belongs to the RETREG family. In terms of assembly, homooligomer; oligomerization is enhanced following endoplasmic reticulum stress and is mediated by the reticulon homology domain. Interacts with ATG8 family modifier proteins MAP1LC3A, MAP1LC3B, GABARAP, GABARAPL1 and GABARAPL2. In terms of processing, phosphorylation at Ser-147 by CAMK2B enhances oligomerization and membrane scission and reticulophagy activity.

Its subcellular location is the golgi apparatus. It localises to the cis-Golgi network membrane. It is found in the endoplasmic reticulum membrane. Its function is as follows. Endoplasmic reticulum (ER)-anchored autophagy regulator which mediates ER delivery into lysosomes through sequestration into autophagosomes. Promotes membrane remodeling and ER scission via its membrane bending capacity and targets the fragments into autophagosomes via interaction with ATG8 family proteins. Active under basal conditions. Required for collagen quality control in a LIR motif-dependent manner. Required for long-term survival of nociceptive and autonomic ganglion neurons. This chain is Reticulophagy regulator 1 (RETREG1), found in Bos taurus (Bovine).